Here is a 265-residue protein sequence, read N- to C-terminus: Bidirectional sugar transporter SWEET7b (265 aa).

The Extracellular segment spans residues 1 to 9 (MVSPDLIRN). The chain crosses the membrane as a helical span at residues 10–30 (MVGIVGNIISFGLFLSPVPTF). Residues 10–97 (MVGIVGNIIS…TIFFLFSDKK (88 aa)) form the MtN3/slv 1 domain. Topologically, residues 31–45 (YRIIKNKDVQDFKAD) are cytoplasmic. The helical transmembrane segment at 46 to 66 (PYLATLLNCMLWVFYGLPIVH) threads the bilayer. Residues 67 to 69 (PNS) lie on the Extracellular side of the membrane. A helical membrane pass occupies residues 70–90 (ILVVTINGIGLVIEAVYLTIF). Topologically, residues 91-101 (FLFSDKKNKKK) are cytoplasmic. A helical membrane pass occupies residues 102–122 (MGVVLATEALFMAAVVLGVLL). Residues 123-131 (GAHTHQRRS) lie on the Extracellular side of the membrane. A helical membrane pass occupies residues 132–152 (LIVGILCVIFGTIMYSSPLTI). In terms of domain architecture, MtN3/slv 2 spans 133 to 215 (IVGILCVIFG…QLILYAIYYR (83 aa)). Over 153–165 (MSQVVKTKSVEYM) the chain is Cytoplasmic. Residues 166 to 186 (PLLLSVVSFLNGLCWTSYALI) form a helical membrane-spanning segment. At 187 to 189 (RLD) the chain is on the extracellular side. The helical transmembrane segment at 190–210 (IFITIPNGLGVLFALMQLILY) threads the bilayer. Residues 211 to 265 (AIYYRTIPKKQDKNLELPTVAPVAKDTSIVTPVSKDDDVDGGNASHVTINITIEL) are Cytoplasmic-facing.

Belongs to the SWEET sugar transporter family. In terms of assembly, forms homooligomers and/or heterooligomers.

The protein localises to the cell membrane. Functionally, mediates both low-affinity uptake and efflux of sugar across the plasma membrane. This Oryza sativa subsp. japonica (Rice) protein is Bidirectional sugar transporter SWEET7b (SWEET7B).